Consider the following 155-residue polypeptide: Desiccation-related protein clone PCC6-19 (155 aa).

Residues 1-155 form a disordered region; sequence MAQFGGEKYG…IKEKLPGGQH (155 aa). 2 stretches are compositionally biased toward gly residues: residues 27–39 and 47–76; these read AHRGGGIMGGGQQ and GVLGHGTAGQHGTTGGGLGHGTAGTGGALG. The segment covering 83-92 has biased composition (low complexity); that stretch reads GSSSSSSSSE. A compositionally biased stretch (polar residues) spans 118-135; that stretch reads TTTDQQQYGTAATHGQAQ. Over residues 136–155 the composition is skewed to basic and acidic residues; the sequence is QHEKKGIMDKIKEKLPGGQH.

It belongs to the plant dehydrin family.

This is Desiccation-related protein clone PCC6-19 from Craterostigma plantagineum (Blue gem).